A 182-amino-acid chain; its full sequence is MKEELVKLIIDSGCIKFGHFILTSGKESNYYIDIKSLITNPKALKLIAKMIKEESRKLGIEYDKVAGPELGAVPIATALSLETDKPLLIIRKKKKEHGTGKLIEGEISPGDRVLLVEDVTTTGGSVIRAAKILKEHGAEVVGIFVVVDREEGARENIEKEGFKLYPLVLVSDLFEAAGVSKD.

Residues arginine 91, lysine 92, lysine 95, histidine 97, and 117 to 125 (EDVTTTGGS) each bind 5-phospho-alpha-D-ribose 1-diphosphate. Orotate is bound by residues threonine 121 and arginine 149.

Belongs to the purine/pyrimidine phosphoribosyltransferase family. PyrE subfamily. Homodimer. Mg(2+) is required as a cofactor.

The catalysed reaction is orotidine 5'-phosphate + diphosphate = orotate + 5-phospho-alpha-D-ribose 1-diphosphate. It functions in the pathway pyrimidine metabolism; UMP biosynthesis via de novo pathway; UMP from orotate: step 1/2. Catalyzes the transfer of a ribosyl phosphate group from 5-phosphoribose 1-diphosphate to orotate, leading to the formation of orotidine monophosphate (OMP). The protein is Orotate phosphoribosyltransferase of Pyrococcus abyssi (strain GE5 / Orsay).